The chain runs to 79 residues: MAEQLEFFPVQSPCRGICQSDERGFCRGCFRSRDERFNWNKMSDGEKQEVLRLCRQRLMRKLRANKPASSDEPEQPSLF.

This is an uncharacterized protein from Escherichia coli (strain K12).